The primary structure comprises 469 residues: Phosphatidylinositol 4-kinase type 2-beta (469 aa).

The tract at residues 1 to 84 (MAEACEPTRP…LDRTRTTSSE (84 aa)) is disordered. The residue at position 37 (serine 37) is a Phosphoserine. The 332-residue stretch at 108–439 (GVFPERISQG…AQMPCVIVEC (332 aa)) folds into the PI3K/PI4K catalytic domain. A G-loop region spans residues 114-120 (ISQGSSG). The ATP site is built by serine 121 and lysine 136. Residues 141 to 143 (EPY) are important for substrate binding. The interval 149–162 (KWTKYVHKVCCPCC) is important for interaction with membranes. ATP contacts are provided by residues 245 to 248 (QLFV) and 259 to 260 (RR). The segment at 252–260 (KEAEYWLRR) is important for interaction with membranes. The catalytic loop stretch occupies residues 289 to 297 (RNTDRGNDN). The activation loop stretch occupies residues 330-350 (AIDNGLAFPFKHPDEWRAYPF). Position 332 (aspartate 332) interacts with ATP. Positions 345–354 (WRAYPFHWAW) are important for interaction with membranes.

It belongs to the PI3/PI4-kinase family. Type II PI4K subfamily.

The protein resides in the cytoplasm. Its subcellular location is the cytosol. It is found in the golgi apparatus membrane. The protein localises to the endoplasmic reticulum membrane. It localises to the cell membrane. The protein resides in the early endosome membrane. The enzyme catalyses a 1,2-diacyl-sn-glycero-3-phospho-(1D-myo-inositol) + ATP = a 1,2-diacyl-sn-glycero-3-phospho-(1D-myo-inositol 4-phosphate) + ADP + H(+). In terms of biological role, together with PI4K2A and the type III PI4Ks (PIK4CA and PIK4CB) it contributes to the overall PI4-kinase activity of the cell. This contribution may be especially significant in plasma membrane, endosomal and Golgi compartments. The phosphorylation of phosphatidylinositol (PI) to PI4P is the first committed step in the generation of phosphatidylinositol 4,5-bisphosphate (PIP2), a precursor of the second messenger inositol 1,4,5-trisphosphate (InsP3). Contributes to the production of InsP3 in stimulated cells and is likely to be involved in the regulation of vesicular trafficking. This chain is Phosphatidylinositol 4-kinase type 2-beta (Pi4k2b), found in Mus musculus (Mouse).